The sequence spans 364 residues: Fructose-bisphosphate aldolase B (364 aa).

Residue A2 is modified to N-acetylalanine. K13 carries the post-translational modification N6-succinyllysine. The residue at position 36 (S36) is a Phosphoserine. Phosphothreonine is present on T39. Residue R43 coordinates beta-D-fructose 1,6-bisphosphate. A Phosphoserine modification is found at S89. A Phosphothreonine modification is found at T119. K121 carries the post-translational modification N6-succinyllysine. A Phosphoserine modification is found at S132. E188 serves as the catalytic Proton acceptor. The active-site Schiff-base intermediate with dihydroxyacetone-P is the K230. Residues S272, S276, S299, and S301 each carry the phosphoserine modification. 272–274 contributes to the beta-D-fructose 1,6-bisphosphate binding site; the sequence is SGG. R304 contributes to the beta-D-fructose 1,6-bisphosphate binding site. S309 is subject to Phosphoserine. At K317 the chain carries N6-succinyllysine.

It belongs to the class I fructose-bisphosphate aldolase family. In terms of assembly, homotetramer. Interacts with BBS1, BBS2, BBS4 and BBS7. Forms a ternary complex with G6PD and TP53; this interaction is direct.

The protein resides in the cytoplasm. The protein localises to the cytosol. It is found in the cytoskeleton. Its subcellular location is the microtubule organizing center. It localises to the centrosome. The protein resides in the centriolar satellite. The enzyme catalyses beta-D-fructose 1,6-bisphosphate = D-glyceraldehyde 3-phosphate + dihydroxyacetone phosphate. It catalyses the reaction beta-D-fructose 1-phosphate = D-glyceraldehyde + dihydroxyacetone phosphate. Its pathway is carbohydrate degradation; glycolysis; D-glyceraldehyde 3-phosphate and glycerone phosphate from D-glucose: step 4/4. The protein operates within carbohydrate biosynthesis; gluconeogenesis. It functions in the pathway carbohydrate metabolism; fructose metabolism. Catalyzes the aldol cleavage of fructose 1,6-biphosphate to form two triosephosphates dihydroxyacetone phosphate and D-glyceraldehyde 3-phosphate in glycolysis as well as the reverse stereospecific aldol addition reaction in gluconeogenesis. In fructolysis, metabolizes fructose 1-phosphate derived from the phosphorylation of dietary fructose by fructokinase into dihydroxyacetone phosphate and D-glyceraldehyde. Acts as an adapter independently of its enzymatic activity, exerts a tumor suppressor role by stabilizing the ternary complex with G6PD and TP53 to inhibit G6PD activity and keep oxidative pentose phosphate metabolism in check. The protein is Fructose-bisphosphate aldolase B (ALDOB) of Pongo abelii (Sumatran orangutan).